The following is a 103-amino-acid chain: Colicin-V (103 aa).

Positions 1-15 (MRTLTLNELDSVSGG) are excised as a propeptide. A disulfide bridge links Cys-91 with Cys-102.

It is found in the secreted. Colicin V kills sensitive cells by disrupting the membrane potential. Functionally, colicins are polypeptide toxins produced by, and active against E.coli and closely related bacteria. This chain is Colicin-V (cvaC), found in Escherichia coli.